The primary structure comprises 747 residues: Endoglucanase D (747 aa).

Residues 1–39 (MHSASRTRARTRVRTAVSGLLAATVLAAPLTLVAAPAQA) form the signal peptide. The active-site Proton donor is Glu-208. Glu-349 acts as the Nucleophile in catalysis. The disordered stretch occupies residues 456 to 475 (APTGLRAGTPTASTVPLTWS). Fibronectin type-III domains are found at residues 456–543 (APTG…TAAG) and 552–639 (VPTG…TAPD). Residues 465 to 475 (PTASTVPLTWS) show a composition bias toward polar residues. One can recognise a CBM2 domain in the interval 638 to 747 (PDPTTGSCAV…TVGGATCTTR (110 aa)).

It belongs to the glycosyl hydrolase 5 (cellulase A) family.

The catalysed reaction is Endohydrolysis of (1-&gt;4)-beta-D-glucosidic linkages in cellulose, lichenin and cereal beta-D-glucans.. It functions in the pathway glycan metabolism; cellulose degradation. The polypeptide is Endoglucanase D (cenD) (Cellulomonas fimi).